A 232-amino-acid polypeptide reads, in one-letter code: uncharacterized protein (232 aa).

This is an uncharacterized protein from Thermoproteus tenax (TTV1).